A 272-amino-acid polypeptide reads, in one-letter code: MQDLKQTIETAFENRGELSPASAPAAVREAVEQALAMLDRGEARVAEKRDGDWVVNEWLKKAVLLSFRLNDNEIIRGGATNFFDKVPLKFADTNSEQMRASGVRVVPPAMARRGAYIGPGAVLMPSYVNIGAYVDEGTMVDTWATVGSCAQIGKNVHLSGGVGIGGVLEPLQAAPTIIEDNCFIGARSEVVEGVIVEEGAVISMGVYIGQSTKIYNRETGEVTYGRVPKGAVVVPGSLPAKDGSHSLYCAVIIKQVDAQTRSKVGINELLRP.

Substrate is bound by residues R104 and D141.

This sequence belongs to the transferase hexapeptide repeat family. In terms of assembly, homotrimer.

The protein localises to the cytoplasm. It catalyses the reaction (S)-2,3,4,5-tetrahydrodipicolinate + succinyl-CoA + H2O = (S)-2-succinylamino-6-oxoheptanedioate + CoA. Its pathway is amino-acid biosynthesis; L-lysine biosynthesis via DAP pathway; LL-2,6-diaminopimelate from (S)-tetrahydrodipicolinate (succinylase route): step 1/3. The chain is 2,3,4,5-tetrahydropyridine-2,6-dicarboxylate N-succinyltransferase from Alkalilimnicola ehrlichii (strain ATCC BAA-1101 / DSM 17681 / MLHE-1).